The sequence spans 406 residues: Probable tRNA pseudouridine synthase D (406 aa).

Asp77 serves as the catalytic Nucleophile. In terms of domain architecture, TRUD spans 150–371; the sequence is GFPNYFGIQR…PGGRRELLIK (222 aa).

This sequence belongs to the pseudouridine synthase TruD family.

The catalysed reaction is uridine(13) in tRNA = pseudouridine(13) in tRNA. Its function is as follows. Could be responsible for synthesis of pseudouridine from uracil-13 in transfer RNAs. This Pyrococcus abyssi (strain GE5 / Orsay) protein is Probable tRNA pseudouridine synthase D.